The sequence spans 248 residues: DNA polymerase sliding clamp 2 (248 aa).

The protein belongs to the PCNA family. The subunits circularize to form a toroid; DNA passes through its center. Replication factor C (RFC) is required to load the toroid on the DNA. Forms a dimeric complex with PCNA3 and trimeric complexes PCNA123 and PCNA323; does not form homotrimers. Crystal structures show a heterotetramer of 2 PCNA2 and 2 PCNA3, which would be large enough to clamp a Holliday junction.

Functionally, sliding clamp subunit that acts as a moving platform for DNA processing. Responsible for tethering the catalytic subunit of DNA polymerase and other proteins to DNA during high-speed replication. Both trimeric complexes inhibit DNA ligase and both 3'-5' and 5'-3' activity of Hel308 (Hjm) helicase, but stimulate Hjc, the Holliday junction cleavage enzyme. In Sulfurisphaera tokodaii (strain DSM 16993 / JCM 10545 / NBRC 100140 / 7) (Sulfolobus tokodaii), this protein is DNA polymerase sliding clamp 2.